The primary structure comprises 303 residues: ATP-dependent (S)-NAD(P)H-hydrate dehydratase (303 aa).

In terms of domain architecture, YjeF C-terminal spans 12–299 (QQQLVCSVIP…AEVRTAFSML (288 aa)). (6S)-NADPHX is bound by residues Gly106 and 158 to 164 (NAVELDR). Residues 194–198 (KGSED) and 213–222 (GSPRRCGGQG) each bind ATP. A (6S)-NADPHX-binding site is contributed by Asp223.

This sequence belongs to the NnrD/CARKD family. Requires Mg(2+) as cofactor.

The catalysed reaction is (6S)-NADHX + ATP = ADP + phosphate + NADH + H(+). It carries out the reaction (6S)-NADPHX + ATP = ADP + phosphate + NADPH + H(+). Its function is as follows. Catalyzes the dehydration of the S-form of NAD(P)HX at the expense of ATP, which is converted to ADP. Together with NAD(P)HX epimerase, which catalyzes the epimerization of the S- and R-forms, the enzyme allows the repair of both epimers of NAD(P)HX, a damaged form of NAD(P)H that is a result of enzymatic or heat-dependent hydration. This chain is ATP-dependent (S)-NAD(P)H-hydrate dehydratase, found in Ixodes scapularis (Black-legged tick).